Consider the following 97-residue polypeptide: Putative septation protein SpoVG (97 aa).

This sequence belongs to the SpoVG family.

Its function is as follows. Could be involved in septation. This Borreliella afzelii (strain PKo) (Borrelia afzelii) protein is Putative septation protein SpoVG.